We begin with the raw amino-acid sequence, 280 residues long: UPF0276 protein NMA0228 (280 aa).

Belongs to the UPF0276 family.

The polypeptide is UPF0276 protein NMA0228 (Neisseria meningitidis serogroup A / serotype 4A (strain DSM 15465 / Z2491)).